We begin with the raw amino-acid sequence, 101 residues long: NAD(P)H-quinone oxidoreductase subunit 4L, chloroplastic (101 aa).

3 consecutive transmembrane segments (helical) span residues 2-22 (ILEHVLVLSAYLFLIGLYGLI), 32-52 (MCLELILNAVNMNFVTFSDFF), and 61-81 (IFCIFVIAIAAAEAAIGLAIV).

The protein belongs to the complex I subunit 4L family. As to quaternary structure, NDH is composed of at least 16 different subunits, 5 of which are encoded in the nucleus.

Its subcellular location is the plastid. The protein localises to the chloroplast thylakoid membrane. The catalysed reaction is a plastoquinone + NADH + (n+1) H(+)(in) = a plastoquinol + NAD(+) + n H(+)(out). It carries out the reaction a plastoquinone + NADPH + (n+1) H(+)(in) = a plastoquinol + NADP(+) + n H(+)(out). NDH shuttles electrons from NAD(P)H:plastoquinone, via FMN and iron-sulfur (Fe-S) centers, to quinones in the photosynthetic chain and possibly in a chloroplast respiratory chain. The immediate electron acceptor for the enzyme in this species is believed to be plastoquinone. Couples the redox reaction to proton translocation, and thus conserves the redox energy in a proton gradient. The sequence is that of NAD(P)H-quinone oxidoreductase subunit 4L, chloroplastic from Lepidium virginicum (Virginia pepperweed).